A 131-amino-acid polypeptide reads, in one-letter code: Profilin (131 aa).

This sequence belongs to the profilin family. As to quaternary structure, occurs in many kinds of cells as a complex with monomeric actin in a 1:1 ratio.

Its subcellular location is the cytoplasm. The protein localises to the cytoskeleton. Functionally, binds to actin and affects the structure of the cytoskeleton. At high concentrations, profilin prevents the polymerization of actin, whereas it enhances it at low concentrations. By binding to PIP2, it inhibits the formation of IP3 and DG. This Prunus avium (Cherry) protein is Profilin.